The chain runs to 337 residues: B3 domain-containing protein REM16 (337 aa).

2 consecutive DNA-binding regions (TF-B3) follow at residues 22–116 (TLHF…FDGQ) and 223–321 (FLVF…FRGE).

The protein resides in the nucleus. This is B3 domain-containing protein REM16 (REM16) from Arabidopsis thaliana (Mouse-ear cress).